The primary structure comprises 70 residues: Movement protein TGBp3 (70 aa).

Residues 1–4 (MEAG) are Lumenal-facing. A helical transmembrane segment spans residues 5–27 (AYLNAIIFVLVATIIAVISRGLT). The Cytoplasmic portion of the chain corresponds to 28–70 (RTEPCTIRITGESITVHACHIDSETIKALANLKPLSLERLSFQ).

It belongs to the Tymovirales TGBp3 protein family.

It is found in the host endoplasmic reticulum membrane. Functionally, plays a role in viral cell-to-cell propagation, by facilitating genome transport to neighboring plant cells through plasmosdesmata. May induce the formation of granular vesicles derived from the Endoplasmic reticulum, which align on actin filaments. The sequence is that of Movement protein TGBp3 from Potato virus X (strain CP) (PVX).